Consider the following 290-residue polypeptide: Ribosomal RNA small subunit methyltransferase A (290 aa).

Residues Asn27, Leu29, Gly54, Glu75, Asp100, and Asn125 each coordinate S-adenosyl-L-methionine.

Belongs to the class I-like SAM-binding methyltransferase superfamily. rRNA adenine N(6)-methyltransferase family. RsmA subfamily.

The protein localises to the cytoplasm. The catalysed reaction is adenosine(1518)/adenosine(1519) in 16S rRNA + 4 S-adenosyl-L-methionine = N(6)-dimethyladenosine(1518)/N(6)-dimethyladenosine(1519) in 16S rRNA + 4 S-adenosyl-L-homocysteine + 4 H(+). Its function is as follows. Specifically dimethylates two adjacent adenosines (A1518 and A1519) in the loop of a conserved hairpin near the 3'-end of 16S rRNA in the 30S particle. May play a critical role in biogenesis of 30S subunits. This chain is Ribosomal RNA small subunit methyltransferase A, found in Streptococcus uberis (strain ATCC BAA-854 / 0140J).